The chain runs to 1547 residues: MASCATVCLPTCGTRLSGHSRSRSVWKLVSYITLLHFILKVFLVFLTSFHLLTQLSIKSGNLLSSLGVAARSQVQIKLRKKEQVEADLVEICFKETYLTRADMWQITTMLRESCVYHQKRIVFCDVIRCWVDSIFKNGRKVFSAYIGPNTNIVFRSESSRMIIIIQLSQETWHFEETGEIIFHRMVNSLLPDIFKQWEENEHHHTVTIVLFTSVSMDSHAVKLKRGEKAKDVQDFYRVVCDQVQLSQWEQIMVRLRFEFQNFAKEVLTESHAKSHTEIRGRILPSVKSNILGAITLAASLVHSPAIDRDLRRTNVEVIVVSPGSGVYEVEYDALYRASEKISSTEVGVDIICMSKAPLHVTPLFLYKPKKCSNQLEYCVPSWIDISYYGDSDFFTNQWVPRCKIYEIQMMGVMENELSAITIDYLNKPSGKKPLSEYCREYDASLFGPIAVELSVEDAASVVSKMRSDTFPKLPVKQLLSSKGSISSLHAPTAVTSKTPPPKASVKVADVRPSPAASKPRVSALTSLLAFGVRAEKSAPASPALSAVNTLSSIQSMDLRRDNDSVKRDTESIVTDDTVHNTKAEPRITEIAPIAPSLPFAPNLKPKKSTSTLSQSPTYNRIAATPDQEVERRSSLSQKVQMGLSGSPLDHRGKVAKAASANAKSINTETTPEKRNMMWRNIRTPSNISQDEMLDILTYSRWRTVYPQKTKRRSAKWKLLASPAALPLRTNIFPTVAELQTEYRFQVYDVSLDTDMENVLGIHGLFREMVSVRLCKGFQLAIGSRVRHVESQRSDGRPSAITTDIGKDALGAVVYLTTGDQVHRISCDYSGMMNVQIYHAIDKVDIEEPVFDIYARRTYSDKFKHFIFPPFDTSSKRLNWNLYDHSLAGYDTAGSAATQTRLNQLRVVLIPSFLSRSKNLGHDDSSEVYNAEEVRLDGLRRILGGIYRHSISRDEDKERAKIAPNLKFYTGELEDFLFQIVESNPAELAGGRDSLFMKRNQRFDKNIKLAQLATELQAPKGGIRFFDRRWHWKSYPHCFIGQDFVEWLIDNYSDIDTPDEAVAYGNELMKKDFFVHVEDRHAFLDGHYFYQLKSEYATEATDSKPAEEKSGWFNSKRSMASVSSEKSLGRFKGSRNQSVQSFGDFLSLSRVTSRSSNDQKEEEINPITVEISKSVRVDLDPSKKSYRPETVLIHHDRIHNPRKCFHLRFEWANTTPKFIEDYISGLTRTCERYGLKLVELPILEVSALLEHNPFASEITLDMPTLDQLSGLPPHVLEYYASDPHAIAREILHHFGFVIDTLSMSDWKLAEVQIRNSWGVPTYKYSQWVEKNGLLIAQVVGDQIIMIPNNLQLNRQSGAQSNAIQLQSEAQGIILEMQYLMCRSEKVRDMLGKVNLSPEASPGTMTPGEEGSKNGTPKLAIEAKMEGRVESPQVEWREDVEIAPEVEHKGGADGDENDEEGDEKSEEGDKGESENENAGMGMEQDGENENENENENENSKDNKANETTSEVKEVPAGVEIEHKEHVEEDKSDGPEPKKEDKGKEVEDDK.

Disordered stretches follow at residues 489-517 (HAPTAVTSKTPPPKASVKVADVRPSPAAS) and 597-632 (LPFAPNLKPKKSTSTLSQSPTYNRIAATPDQEVERR). Over residues 608–618 (STSTLSQSPTY) the composition is skewed to polar residues. One can recognise a DEP domain in the interval 1018–1093 (PKGGIRFFDR…DGHYFYQLKS (76 aa)). The tract at residues 1393–1547 (NLSPEASPGT…DKGKEVEDDK (155 aa)) is disordered. Over residues 1419 to 1450 (IEAKMEGRVESPQVEWREDVEIAPEVEHKGGA) the composition is skewed to basic and acidic residues. Acidic residues-rich tracts occupy residues 1451–1464 (DGDENDEEGDEKSE) and 1482–1494 (QDGENENENENEN). Over residues 1495–1547 (ENSKDNKANETTSEVKEVPAGVEIEHKEHVEEDKSDGPEPKKEDKGKEVEDDK) the composition is skewed to basic and acidic residues.

It belongs to the IML1 family.

Its subcellular location is the vacuole membrane. This is Vacuolar membrane-associated protein IML1 (IML1) from Yarrowia lipolytica (strain CLIB 122 / E 150) (Yeast).